The primary structure comprises 221 residues: Ras-related protein RABA5a (221 aa).

Residue 21–28 (GDSAVGKS) participates in GTP binding. Positions 43–51 (SKSTIGVEF) match the Effector region motif. Residues 69 to 73 (DTAGQ), 127 to 130 (NKSD), and 157 to 158 (SA) each bind GTP. S-geranylgeranyl cysteine attachment occurs at residues C218 and C219.

It belongs to the small GTPase superfamily. Rab family.

The protein resides in the cell membrane. Its function is as follows. Intracellular vesicle trafficking and protein transport. This is Ras-related protein RABA5a (RABA5A) from Arabidopsis thaliana (Mouse-ear cress).